Here is an 880-residue protein sequence, read N- to C-terminus: Alanine--tRNA ligase (880 aa).

Zn(2+) contacts are provided by His566, His570, Cys668, and His672.

This sequence belongs to the class-II aminoacyl-tRNA synthetase family. The cofactor is Zn(2+).

Its subcellular location is the cytoplasm. The catalysed reaction is tRNA(Ala) + L-alanine + ATP = L-alanyl-tRNA(Ala) + AMP + diphosphate. Catalyzes the attachment of alanine to tRNA(Ala) in a two-step reaction: alanine is first activated by ATP to form Ala-AMP and then transferred to the acceptor end of tRNA(Ala). Also edits incorrectly charged Ser-tRNA(Ala) and Gly-tRNA(Ala) via its editing domain. This Nostoc punctiforme (strain ATCC 29133 / PCC 73102) protein is Alanine--tRNA ligase.